A 215-amino-acid polypeptide reads, in one-letter code: MKASSSLPDGVQRRQFDNRSRLTTHGTTVYGEPRDTDGWRLWDAGRSKLGAMFKLDIETGLTGGESILYLGAASGTTVSHVADFAGPTYAIEFAPRPVRDLLEVATTRPNLIPLLCDARQPETYAHVVETDIEYLIQDVATRGQATVALRNRQFLAPDGKLILMIKARSEDVLSDPEDVFDTIISTLREGYIIQTRQRLDRFHDDHLAVVATPNM.

The disordered stretch occupies residues Met-1–Val-29. Residues Val-11–Ser-20 show a composition bias toward basic and acidic residues. Residues Thr-76–Thr-77, Glu-92–Phe-93, Asp-117–Ala-118, and Asp-138–Thr-141 contribute to the S-adenosyl-L-methionine site.

The protein belongs to the methyltransferase superfamily. Fibrillarin family. In terms of assembly, interacts with nop5. Component of box C/D small ribonucleoprotein (sRNP) particles that contain rpl7ae, FlpA and nop5, plus a guide RNA.

Involved in pre-rRNA and tRNA processing. Utilizes the methyl donor S-adenosyl-L-methionine to catalyze the site-specific 2'-hydroxyl methylation of ribose moieties in rRNA and tRNA. Site specificity is provided by a guide RNA that base pairs with the substrate. Methylation occurs at a characteristic distance from the sequence involved in base pairing with the guide RNA. This chain is Fibrillarin-like rRNA/tRNA 2'-O-methyltransferase, found in Haloquadratum walsbyi (strain DSM 16790 / HBSQ001).